The chain runs to 977 residues: Protein bric-a-brac 1 (977 aa).

Positions 1-97 (MASAQAETNV…RSSSVASPSS (97 aa)) are disordered. The span at 34–43 (PKSNRSSPTQ) shows a compositional bias: polar residues. The segment covering 44–69 (QEEKRIKSEDRTSPTGGAKDEDKESQ) has biased composition (basic and acidic residues). Low complexity predominate over residues 80 to 97 (SPVSSPQGRSSSVASPSS). The BTB domain maps to 127–192 (VDVTLACDGR…MYRGEINVSQ (66 aa)). 4 disordered regions span residues 221–249 (AAAAAASSERMPSSPKESTSTSRTEHDRE), 281–348 (ERQQ…GSTV), 362–434 (DMPS…RFPL), and 447–497 (SGLG…ADDL). Residues 316–330 (ERMELEQKERERQRD) are compositionally biased toward basic and acidic residues. The segment covering 372 to 396 (PLSRSSRPHSQSPQQQQAQQQGQLP) has biased composition (low complexity). Positions 469-491 (GGGVGGGGVGGGGAGGVGSGGGS) are enriched in gly residues. The 53-residue stretch at 559–611 (FRERGPLKSWRPETMAEAIFSVLKEGLSLSQAARKYDIPYPTFVLYANRVHNM) folds into the HTH psq-type domain. Positions 569 to 614 (RPETMAEAIFSVLKEGLSLSQAARKYDIPYPTFVLYANRVHNMLGP) form a DNA-binding region, H-T-H motif. Positions 621–632 (DLRPKGRGRPQR) form a DNA-binding region, a.T hook. Disordered stretches follow at residues 772 to 900 (ASIS…LGDL) and 925 to 977 (VGAS…TTSE). 4 stretches are compositionally biased toward low complexity: residues 804–816 (MAVALHHQQQQQA), 838–853 (QQQQQQQQQHHQGGHQ), 862–872 (ASSSSSASSSS), and 925–966 (VGAS…SSGG).

As to expression, leg imaginal disk at the central region of the tarsus and in eye antenna disk at the basal cylinder.

It is found in the nucleus. Functionally, probably acts as a transcriptional regulator. Required for the specification of the tarsal segment. Also involved in antenna development. This chain is Protein bric-a-brac 1 (bab1), found in Drosophila melanogaster (Fruit fly).